Consider the following 360-residue polypeptide: Heat-inducible transcription repressor HrcA (360 aa).

The protein belongs to the HrcA family.

In terms of biological role, negative regulator of class I heat shock genes (grpE-dnaK-dnaJ and groELS operons). Prevents heat-shock induction of these operons. This chain is Heat-inducible transcription repressor HrcA, found in Streptococcus thermophilus (strain CNRZ 1066).